The sequence spans 421 residues: Subtilisin-like protease 2 (421 aa).

The signal sequence occupies residues 1–16 (MQLLNFGLLLLPFVAG). Positions 17-122 (DLAPQPEPLL…VHPDQHVYLA (106 aa)) are excised as a propeptide. An Inhibitor I9 domain is found at 36-122 (QYIVTLKEGL…VHPDQHVYLA (87 aa)). Residues 131-421 (RWGLGYMSSK…ERKFTLPKYF (291 aa)) enclose the Peptidase S8 domain. Active-site charge relay system residues include aspartate 169 and histidine 201. Asparagine 248, asparagine 261, and asparagine 348 each carry an N-linked (GlcNAc...) asparagine glycan. Residue serine 357 is the Charge relay system of the active site. Asparagine 388 is a glycosylation site (N-linked (GlcNAc...) asparagine).

It belongs to the peptidase S8 family.

The protein localises to the secreted. In terms of biological role, secreted subtilisin-like serine protease with keratinolytic activity that contributes to pathogenicity. In Trichophyton equinum (Horse ringworm fungus), this protein is Subtilisin-like protease 2 (SUB2).